The sequence spans 219 residues: RING-H2 finger protein ATL78 (219 aa).

A helical membrane pass occupies residues 57 to 77 (VMVLSVLLCALVCSLGLNSII). Residues 131-173 (CAICLSEFVAEERVKLLPTCHHGFHVRCIDKWLSSHSSCPTCR) form an RING-type; atypical zinc finger.

The protein belongs to the RING-type zinc finger family. ATL subfamily.

The protein localises to the membrane. It catalyses the reaction S-ubiquitinyl-[E2 ubiquitin-conjugating enzyme]-L-cysteine + [acceptor protein]-L-lysine = [E2 ubiquitin-conjugating enzyme]-L-cysteine + N(6)-ubiquitinyl-[acceptor protein]-L-lysine.. Its pathway is protein modification; protein ubiquitination. The sequence is that of RING-H2 finger protein ATL78 (ATL78) from Arabidopsis thaliana (Mouse-ear cress).